The sequence spans 361 residues: Protein-L-isoaspartate O-methyltransferase domain-containing protein 2 (361 aa).

Residue Gly-2 is the site of N-myristoyl glycine attachment. Residue Ser-64 is part of the active site. AdoMet binding motif stretches follow at residues 85-94, 160-164, and 181-191; these read LNLGSGTGYL, YDRVY, and LKVGGILVMPL. Residues 240–250 are BC-box; it reads VRSLQDLARIA. Over residues 303–312 the composition is skewed to polar residues; sequence SNPSDDNSSG. The tract at residues 303-335 is disordered; that stretch reads SNPSDDNSSGDLEEERREEEATTPPDAKPEPPV. A CUL-box region spans residues 345 to 348; it reads LPLP.

Belongs to the methyltransferase superfamily. L-isoaspartyl/D-aspartyl protein methyltransferase family.

It is found in the cytoplasm. May act as a substrate recognition component of an ECS (Elongin BC-CUL5-SOCS-box protein) E3 ubiquitin ligase complex which mediates the ubiquitination and subsequent proteasomal degradation of target proteins. May bind to the methyltransferase cofactor S-adenosylmethionine (AdoMet) via the N-terminal AdoMet binding motif, but probably does not display methyltransferase activity. This chain is Protein-L-isoaspartate O-methyltransferase domain-containing protein 2 (PCMTD2), found in Bos taurus (Bovine).